A 447-amino-acid polypeptide reads, in one-letter code: Dihydroorotase (447 aa).

The Zn(2+) site is built by H81 and H83. Substrate is bound by residues 83–85 (HFR) and N115. Residues D171, H198, and H252 each contribute to the Zn(2+) site. N298 lines the substrate pocket. Residue D325 participates in Zn(2+) binding. Residue D325 is part of the active site. Substrate contacts are provided by residues H329 and 343-344 (FG).

Belongs to the metallo-dependent hydrolases superfamily. DHOase family. Class I DHOase subfamily. Requires Zn(2+) as cofactor.

The enzyme catalyses (S)-dihydroorotate + H2O = N-carbamoyl-L-aspartate + H(+). It participates in pyrimidine metabolism; UMP biosynthesis via de novo pathway; (S)-dihydroorotate from bicarbonate: step 3/3. Catalyzes the reversible cyclization of carbamoyl aspartate to dihydroorotate. The protein is Dihydroorotase of Ehrlichia chaffeensis (strain ATCC CRL-10679 / Arkansas).